A 534-amino-acid chain; its full sequence is Cytochrome P450 monooxygenase AN1598 (534 aa).

Asparagine 3 carries an N-linked (GlcNAc...) asparagine glycan. A helical transmembrane segment spans residues 25-45 (LYLEILGVLSVVYLLQTLVAY). An N-linked (GlcNAc...) asparagine glycan is attached at asparagine 95. Cysteine 464 contacts heme. Residue asparagine 498 is glycosylated (N-linked (GlcNAc...) asparagine).

It belongs to the cytochrome P450 family. Requires heme as cofactor.

Its subcellular location is the membrane. The protein operates within secondary metabolite biosynthesis; terpenoid biosynthesis. Functionally, bifunctional terpene synthase; part of the gene cluster that mediates the biosynthesis of the diterpene ent-pimara-8(14),15-diene (PD). Within the cluster, the HMG-CoA reductase AN1593 functions in the mevalonate pathway, which produces isoprenoid precursors. The geranylgeranyl pyrophosphate (GGPP) synthase AN1592 is needed in the formation of GGPP, the precursor for diterpenes. Lastly, the pimaradiene synthase pbcA performs the 2 cyclization steps that convert GGPP to ent-pimara-8(14),15-diene. The putative roles of the remaining cluster enzymes in ent-pimara-8(14),15-diene biosynthesis is unclear. The cytochrome P450 monooxygenase AN1598, the glutathione S-transferase AN1595, the oxidoreductases AN1596 and AN1597 probably function as decorative enzymes. It is possible that in biological conditions the compound is oxidized to ent-pimara-8(14),15-dien-19-oic acid, which is a bioactive diterpene compound predominant in many plant extracts. The sequence is that of Cytochrome P450 monooxygenase AN1598 from Emericella nidulans (strain FGSC A4 / ATCC 38163 / CBS 112.46 / NRRL 194 / M139) (Aspergillus nidulans).